We begin with the raw amino-acid sequence, 236 residues long: Probable transcriptional regulatory protein UU295 (236 aa).

This sequence belongs to the TACO1 family.

It is found in the cytoplasm. The protein is Probable transcriptional regulatory protein UU295 of Ureaplasma parvum serovar 3 (strain ATCC 700970).